The chain runs to 632 residues: Arginyl-tRNA--protein transferase 1 (632 aa).

The segment covering 1-18 (MSLKNDASSSHDGGSNRE) has biased composition (polar residues). Disordered stretches follow at residues 1-27 (MSLK…HGRR), 113-144 (KLDV…AKSE), 284-312 (NGNI…HQAR), and 517-580 (PAAS…NDIN). Basic and acidic residues predominate over residues 113–122 (KLDVQPREQR). A compositionally biased stretch (polar residues) spans 285–296 (GNISRGANSLDG). Residues 298–310 (ETLHAKKDSENHQ) show a composition bias toward basic and acidic residues. The span at 538–563 (SDEDEDEDEDDDDDDDDDEEMYETES) shows a compositional bias: acidic residues. Residues 564–578 (EDSHIESDPGSKDND) show a composition bias toward basic and acidic residues.

Belongs to the R-transferase family.

It carries out the reaction an N-terminal L-alpha-aminoacyl-[protein] + L-arginyl-tRNA(Arg) = an N-terminal L-arginyl-L-aminoacyl-[protein] + tRNA(Arg) + H(+). Involved in the post-translational conjugation of arginine to the N-terminal aspartate or glutamate of a protein. This arginylation is required for degradation of the protein via the ubiquitin pathway. Component of the N-end rule pathway with ATE2 and PRT6. The N-end rule pathway regulates seed after-ripening, seedling sugar sensitivity, seedling lipid breakdown, and abscisic acid (ABA) sensitivity of germination. The end-rule pathway regulates various aspects of leaf and shoot development. Involved in the oxygen-dependent N-arginylation of RAP2-12, an activator of hypoxic gene expression. This N-terminal modification leads to ubiquitination by PRT6 and subsequent degradation of RAP2-12 under aerobic conditions. Has an important role in the progression of leaf senescence. Involved in disease resistance. The end-rule pathway plays a role in regulating the timing and amplitude of the immune response following infection with the bacterial pathogen Pseudomonas syringae pv tomato. Regulates the biosynthesis of plant-defense metabolites such as glucosinolates, and the biosynthesis and response to the phytohormone jasmonate (JA), which plays a key role in plant immunity. This is Arginyl-tRNA--protein transferase 1 from Arabidopsis thaliana (Mouse-ear cress).